Here is a 331-residue protein sequence, read N- to C-terminus: Large ribosomal subunit protein uL3 (331 aa).

The protein belongs to the universal ribosomal protein uL3 family. Part of the 50S ribosomal subunit. Forms a cluster with proteins L14 and L24e.

Functionally, one of the primary rRNA binding proteins, it binds directly near the 3'-end of the 23S rRNA, where it nucleates assembly of the 50S subunit. This chain is Large ribosomal subunit protein uL3, found in Archaeoglobus fulgidus (strain ATCC 49558 / DSM 4304 / JCM 9628 / NBRC 100126 / VC-16).